The chain runs to 503 residues: GMP synthase [glutamine-hydrolyzing] (503 aa).

The 178-residue stretch at 1 to 178 (MREANVYSEI…LHRAAGIPAD (178 aa)) folds into the Glutamine amidotransferase type-1 domain. C60 (nucleophile) is an active-site residue. Active-site residues include H152 and E154. The GMPS ATP-PPase domain maps to 179–377 (WNSGNVIADQ…LGLPEVIVGR (199 aa)). 206-212 (SGGVDSA) contributes to the ATP binding site.

As to quaternary structure, homodimer.

It catalyses the reaction XMP + L-glutamine + ATP + H2O = GMP + L-glutamate + AMP + diphosphate + 2 H(+). It participates in purine metabolism; GMP biosynthesis; GMP from XMP (L-Gln route): step 1/1. Functionally, catalyzes the synthesis of GMP from XMP. The protein is GMP synthase [glutamine-hydrolyzing] of Leifsonia xyli subsp. xyli (strain CTCB07).